A 337-amino-acid polypeptide reads, in one-letter code: Putative high mobility group B protein 11 (337 aa).

Residues 34–125 (VRNPELFWEM…MLFEFEHLYY (92 aa)) enclose the ARID domain. Disordered stretches follow at residues 197–221 (TKRG…QRTG) and 298–337 (AGTS…EVSQ). The HMG box DNA-binding region spans 215–282 (PKRQRTGYNF…RYKMEILQYR (68 aa)). Residues 319 to 329 (TDACTSASSAA) are compositionally biased toward low complexity.

This sequence belongs to the HMGB family.

It is found in the nucleus. Functionally, binds preferentially DNA with A/T-rich content. This chain is Putative high mobility group B protein 11 (HMGB11), found in Arabidopsis thaliana (Mouse-ear cress).